The primary structure comprises 205 residues: Regulator of G-protein signaling 4 (205 aa).

Residues Cys2, Cys12, and Cys95 are each lipidated (S-palmitoyl cysteine). Residues 62-178 (SLENLISHEC…LKSRFYLDLV (117 aa)) enclose the RGS domain.

Palmitoylated on Cys-2 and/or Cys-12. In terms of processing, phosphorylated by cyclic GMP-dependent protein kinase.

In terms of biological role, inhibits signal transduction by increasing the GTPase activity of G protein alpha subunits thereby driving them into their inactive GDP-bound form. Activity on G(z)-alpha is inhibited by phosphorylation of the G-protein. Activity on G(z)-alpha and G(i)-alpha-1 is inhibited by palmitoylation of the G-protein. This is Regulator of G-protein signaling 4 (RGS4) from Bos taurus (Bovine).